We begin with the raw amino-acid sequence, 121 residues long: Small ribosomal subunit protein uS10 (121 aa).

Positions 1–20 are disordered; it reads MTEQKAKSSKTSSEEAKKQK.

The protein belongs to the universal ribosomal protein uS10 family. As to quaternary structure, part of the 30S ribosomal subunit.

In terms of biological role, involved in the binding of tRNA to the ribosomes. This is Small ribosomal subunit protein uS10 from Mycoplasmoides gallisepticum (strain R(low / passage 15 / clone 2)) (Mycoplasma gallisepticum).